The sequence spans 52 residues: Large ribosomal subunit protein eL39 (52 aa).

This sequence belongs to the eukaryotic ribosomal protein eL39 family.

The polypeptide is Large ribosomal subunit protein eL39 (RPL39) (Tetrahymena thermophila (strain SB210)).